Reading from the N-terminus, the 714-residue chain is Ribonucleoside-diphosphate reductase 2 subunit alpha (714 aa).

Substrate contacts are provided by residues threonine 161, 177-178, glycine 206, 386-390, and 588-592; these read SC, NLCSE, and PTGSI. Cysteine 178 and cysteine 415 are joined by a disulfide. The active-site Proton acceptor is the asparagine 386. The active-site Cysteine radical intermediate is cysteine 388. Glutamate 390 serves as the catalytic Proton acceptor.

Belongs to the ribonucleoside diphosphate reductase large chain family. Tetramer of two alpha and two beta subunits.

The enzyme catalyses a 2'-deoxyribonucleoside 5'-diphosphate + [thioredoxin]-disulfide + H2O = a ribonucleoside 5'-diphosphate + [thioredoxin]-dithiol. Its activity is regulated as follows. Under complex allosteric control mediated by deoxynucleoside triphosphates and ATP binding. The type of nucleotide bound at the specificity site determines substrate preference. It seems probable that ATP makes the enzyme reduce CDP and UDP, dGTP favors ADP reduction and dTTP favors GDP reduction. Provides the precursors necessary for DNA synthesis. Catalyzes the biosynthesis of deoxyribonucleotides from the corresponding ribonucleotides. R1E contains the binding sites for both substrates and allosteric effectors and carries out the actual reduction of the ribonucleotide. The chain is Ribonucleoside-diphosphate reductase 2 subunit alpha (nrdE) from Escherichia coli (strain K12).